The primary structure comprises 92 residues: UPF0298 protein BH2594 (92 aa).

The protein belongs to the UPF0298 family.

The protein resides in the cytoplasm. In Halalkalibacterium halodurans (strain ATCC BAA-125 / DSM 18197 / FERM 7344 / JCM 9153 / C-125) (Bacillus halodurans), this protein is UPF0298 protein BH2594.